The primary structure comprises 265 residues: Ubiquinone biosynthesis protein COQ4 homolog, mitochondrial (265 aa).

Zn(2+) is bound by residues His-162, Asp-163, His-166, and Glu-178.

Belongs to the COQ4 family. Component of a multi-subunit COQ enzyme complex. Zn(2+) serves as cofactor.

The protein resides in the mitochondrion inner membrane. It carries out the reaction a 4-hydroxy-3-methoxy-5-(all-trans-polyprenyl)benzoate + H(+) = a 2-methoxy-6-(all-trans-polyprenyl)phenol + CO2. It functions in the pathway cofactor biosynthesis; ubiquinone biosynthesis. Lyase that catalyzes the C1-decarboxylation of 4-hydroxy-3-methoxy-5-(all-trans-polyprenyl)benzoic acid into 2-methoxy-6-(all-trans-polyprenyl)phenol during ubiquinone biosynthesis. This Drosophila willistoni (Fruit fly) protein is Ubiquinone biosynthesis protein COQ4 homolog, mitochondrial.